The chain runs to 332 residues: tRNA-dihydrouridine synthase B (332 aa).

Residues 16–18 (PMA) and glutamine 70 each bind FMN. Cysteine 100 (proton donor) is an active-site residue. Residues lysine 139, 200–202 (NGD), and 224–225 (GR) contribute to the FMN site.

This sequence belongs to the Dus family. DusB subfamily. Requires FMN as cofactor.

It carries out the reaction a 5,6-dihydrouridine in tRNA + NAD(+) = a uridine in tRNA + NADH + H(+). The enzyme catalyses a 5,6-dihydrouridine in tRNA + NADP(+) = a uridine in tRNA + NADPH + H(+). Functionally, catalyzes the synthesis of 5,6-dihydrouridine (D), a modified base found in the D-loop of most tRNAs, via the reduction of the C5-C6 double bond in target uridines. The chain is tRNA-dihydrouridine synthase B from Xanthomonas axonopodis pv. citri (strain 306).